The following is a 410-amino-acid chain: Multidrug transporter MdfA (410 aa).

Residues 1 to 15 (MQNKLASGARLGRQA) lie on the Cytoplasmic side of the membrane. A helical transmembrane segment spans residues 16-36 (LLFPLCLVLYEFSTYIGNDMI). Residues 37–52 (QPGMLAVVEQYQAGID) are Periplasmic-facing. Residues 53 to 73 (WVPTSMTAYLAGGMFLQWLLG) form a helical membrane-spanning segment. The Cytoplasmic portion of the chain corresponds to 74–82 (PLSDRIGRR). A helical transmembrane segment spans residues 83-103 (PVMLAGVVWFIVTCLAILLAQ). The Periplasmic portion of the chain corresponds to 104–109 (NIEQFT). A helical membrane pass occupies residues 110–130 (LLRFLQGISLCFIGAVGYAAI). Topologically, residues 131–144 (QESFEEAVCIKITA) are cytoplasmic. The helical transmembrane segment at 145-165 (LMANVALIAPLLGPLVGAAWI) threads the bilayer. Residue His166 is a topological domain, periplasmic. A helical transmembrane segment spans residues 167–187 (VLPWEGMFVLFAALAAISFFG). Over 188 to 226 (LQRAMPETATRIGEKLSLKELGRDYKLVLKNGRFVAGAL) the chain is Cytoplasmic. The chain crosses the membrane as a helical span at residues 227-247 (ALGFVSLPLLAWIAQSPIIII). At 248 to 255 (TGEQLSSY) the chain is on the periplasmic side. The chain crosses the membrane as a helical span at residues 256 to 276 (EYGLLQVPIFGALIAGNLLLA). At 277–287 (RLTSRRTVRSL) the chain is on the cytoplasmic side. A helical transmembrane segment spans residues 288–308 (IIMGGWPIMIGLLVAAAATVI). The Periplasmic segment spans residues 309 to 314 (SSHAYL). Residues 315–335 (WMTAGLSIYAFGIGLANAGLV) form a helical membrane-spanning segment. At 336–346 (RLTLFASDMSK) the chain is on the cytoplasmic side. Residues 347–367 (GTVSAAMGMLQMLIFTVGIEI) traverse the membrane as a helical segment. Over 368–378 (SKHAWLNGGNG) the chain is Periplasmic. The chain crosses the membrane as a helical span at residues 379-399 (LFNLFNLVNGILWLSLMVIFL). Topologically, residues 400 to 410 (KDKQMGNSHEG) are cytoplasmic.

Belongs to the major facilitator superfamily. MdfA family. Monomer.

The protein localises to the cell inner membrane. Functionally, efflux pump driven by the proton motive force. Confers resistance to a broad spectrum of chemically unrelated drugs. The sequence is that of Multidrug transporter MdfA (mdfA) from Escherichia coli O6:H1 (strain CFT073 / ATCC 700928 / UPEC).